Consider the following 204-residue polypeptide: Thymidine kinase (204 aa).

ATP-binding positions include 15–22 (GSMFSGKS) and 88–91 (DEVQ). Glu-89 serves as the catalytic Proton acceptor. Zn(2+) contacts are provided by Cys-145, Cys-148, Cys-183, and Cys-186.

The protein belongs to the thymidine kinase family. Homotetramer.

Its subcellular location is the cytoplasm. It catalyses the reaction thymidine + ATP = dTMP + ADP + H(+). In Halalkalibacterium halodurans (strain ATCC BAA-125 / DSM 18197 / FERM 7344 / JCM 9153 / C-125) (Bacillus halodurans), this protein is Thymidine kinase.